The chain runs to 334 residues: D-fructose 1,6-bisphosphatase class 2/sedoheptulose 1,7-bisphosphatase (334 aa).

Asp-33, Glu-57, Asp-85, and Glu-88 together coordinate Mn(2+). Substrate contacts are provided by residues Glu-88–Thr-90, Tyr-119, Arg-164–Arg-166, and Asp-186–Asp-188. Glu-213 is a Mn(2+) binding site.

It belongs to the FBPase class 2 family. Homotetramer. Mn(2+) is required as a cofactor.

It catalyses the reaction beta-D-fructose 1,6-bisphosphate + H2O = beta-D-fructose 6-phosphate + phosphate. It carries out the reaction D-sedoheptulose 1,7-bisphosphate + H2O = D-sedoheptulose 7-phosphate + phosphate. It participates in carbohydrate biosynthesis; Calvin cycle. Functionally, catalyzes the hydrolysis of fructose 1,6-bisphosphate (Fru 1,6-P2) and sedoheptulose 1,7-bisphosphate (Sed 1,7-P2) to fructose 6-phosphate and sedoheptulose 7-phosphate, respectively. In Synechococcus sp. (strain CC9605), this protein is D-fructose 1,6-bisphosphatase class 2/sedoheptulose 1,7-bisphosphatase.